A 283-amino-acid chain; its full sequence is MIIHPQFDPVLISIGPLAVRWYALSYILGFILFTFLGRRRIAQGLSVFTKESLDDFLTWGILGVIFGGRLGYVLFYKFSDYLAHPLDIFKVWEGGMSFHGGFLGVVIAIWLFGRKHGIGFLKLMDTVAPLVPLGLASGRIGNFINGELWGRVTDINAFWAMGFPQARYEDLEAAAHNPLWAEWLQQYGMLPRHPSQLYQFALEGICLFAVVWLFSKKQRPTGQVASLFLGGYGIFRFIAEFARQPDDYLGLLTLGLSMGQWLSVPMIVLGIVGFVRFGMKKQH.

4 helical membrane passes run 17-37, 56-76, 92-112, and 117-137; these read LAVRWYALSYILGFILFTFLG, FLTWGILGVIFGGRLGYVLFY, WEGGMSFHGGFLGVVIAIWLF, and GIGFLKLMDTVAPLVPLGLAS. Arg-139 provides a ligand contact to a 1,2-diacyl-sn-glycero-3-phospho-(1'-sn-glycerol). The next 3 membrane-spanning stretches (helical) occupy residues 194–214, 222–242, and 255–275; these read PSQLYQFALEGICLFAVVWLF, GQVASLFLGGYGIFRFIAEFA, and GLSMGQWLSVPMIVLGIVGFV.

It belongs to the Lgt family.

It localises to the cell inner membrane. It carries out the reaction L-cysteinyl-[prolipoprotein] + a 1,2-diacyl-sn-glycero-3-phospho-(1'-sn-glycerol) = an S-1,2-diacyl-sn-glyceryl-L-cysteinyl-[prolipoprotein] + sn-glycerol 1-phosphate + H(+). It functions in the pathway protein modification; lipoprotein biosynthesis (diacylglyceryl transfer). Its function is as follows. Catalyzes the transfer of the diacylglyceryl group from phosphatidylglycerol to the sulfhydryl group of the N-terminal cysteine of a prolipoprotein, the first step in the formation of mature lipoproteins. The sequence is that of Phosphatidylglycerol--prolipoprotein diacylglyceryl transferase from Neisseria meningitidis serogroup C (strain 053442).